A 353-amino-acid polypeptide reads, in one-letter code: ATP-dependent kinase YFH7 (353 aa).

31–39 (GSPGSGKST) contributes to the ATP binding site.

The protein belongs to the YFH7 family.

ATP-dependent kinase that could be involved in endoplasmic reticulum membrane assembly. This is ATP-dependent kinase YFH7 (YFH7) from Saccharomyces cerevisiae (strain Lalvin EC1118 / Prise de mousse) (Baker's yeast).